We begin with the raw amino-acid sequence, 823 residues long: Endoplasmin homolog (823 aa).

The N-terminal stretch at 1–23 (MRKRTLVSVLFLFSLLFLLPDQG) is a signal peptide. Residues 29 to 60 (NAEESSDDVTDPPKVEEKIGGHGGLSTDSDVV) are disordered. A compositionally biased stretch (basic and acidic residues) spans 39-48 (DPPKVEEKIG). ATP-binding positions include glutamate 106, asparagine 110, aspartate 154, methionine 159, asparagine 167, lysine 173, 174-175 (SG), 194-199 (QFGVGF), phenylalanine 199, and threonine 246. N-linked (GlcNAc...) asparagine glycosylation is present at asparagine 110. A disordered region spans residues 289 to 328 (ETEVPVEEDESADEETETTSTEEEKEEDAEEEDGEKKQKT). Acidic residues predominate over residues 290 to 321 (TEVPVEEDESADEETETTSTEEEKEEDAEEED). 2 N-linked (GlcNAc...) asparagine glycosylation sites follow: asparagine 452 and asparagine 620. Residues 777 to 792 (VADEEIEAAEEPETSE) show a composition bias toward acidic residues. Residues 777 to 823 (VADEEIEAAEEPETSEATETKSDDLAGGLNIEAEPVEQQEENTKDEL) are disordered. Residues 820 to 823 (KDEL) carry the Prevents secretion from ER motif.

Belongs to the heat shock protein 90 family. In terms of assembly, interacts with FKBP42. Interacts with P23-1. Ubiquitous.

It is found in the endoplasmic reticulum lumen. Its function is as follows. May have a molecular chaperone role in the processing of secreted materials. Required for shoot apical meristem (SAM), root apical meristem (RAM) and floral meristem (FM) formation, probably by regulating the folding of CLAVATA proteins (CLVs). Also involved in pollen tube elongation. Involved in resistance to tunicamycin- or high calcium-induced ER stresses. Possesses ATPase activity. This chain is Endoplasmin homolog, found in Arabidopsis thaliana (Mouse-ear cress).